A 111-amino-acid chain; its full sequence is Nucleoid-associated protein Cpar_0834 (111 aa).

It belongs to the YbaB/EbfC family. In terms of assembly, homodimer.

The protein localises to the cytoplasm. It localises to the nucleoid. Functionally, binds to DNA and alters its conformation. May be involved in regulation of gene expression, nucleoid organization and DNA protection. The polypeptide is Nucleoid-associated protein Cpar_0834 (Chlorobaculum parvum (strain DSM 263 / NCIMB 8327) (Chlorobium vibrioforme subsp. thiosulfatophilum)).